The chain runs to 248 residues: Triosephosphate isomerase (248 aa).

14–16 (NWK) lines the substrate pocket. Residue H99 is the Electrophile of the active site. Catalysis depends on E170, which acts as the Proton acceptor. Substrate-binding positions include G176, S212, and 233-234 (GG).

The protein belongs to the triosephosphate isomerase family. As to quaternary structure, homodimer.

It is found in the cytoplasm. The enzyme catalyses D-glyceraldehyde 3-phosphate = dihydroxyacetone phosphate. The protein operates within carbohydrate biosynthesis; gluconeogenesis. It functions in the pathway carbohydrate degradation; glycolysis; D-glyceraldehyde 3-phosphate from glycerone phosphate: step 1/1. Its function is as follows. Involved in the gluconeogenesis. Catalyzes stereospecifically the conversion of dihydroxyacetone phosphate (DHAP) to D-glyceraldehyde-3-phosphate (G3P). This is Triosephosphate isomerase from Bordetella bronchiseptica (strain ATCC BAA-588 / NCTC 13252 / RB50) (Alcaligenes bronchisepticus).